Consider the following 1010-residue polypeptide: Plasma membrane ATPase 2 (1010 aa).

Over residues 1–14 (MQRNNGEGRPEGMH) the composition is skewed to basic and acidic residues. 2 disordered regions span residues 1 to 126 (MQRN…EDED) and 139 to 165 (QDQE…PEEL). Over 1–201 (MQRNNGEGRP…KEEKTNNIKK (201 aa)) the chain is Cytoplasmic. Residues 25 to 34 (FKNNASPQDD) show a composition bias toward polar residues. A compositionally biased stretch (acidic residues) spans 42-52 (YEEGGVEDSAV). The segment covering 68 to 106 (APNTHAQQANLQSGNTSITHETQSTSRGQEATTSPSLSA) has biased composition (polar residues). Positions 140–151 (DQEEEQVEEEES) are enriched in acidic residues. Residues 202–222 (FLSFFVGPIQFVMELAAALAA) traverse the membrane as a helical segment. At 223–226 (GLRD) the chain is on the extracellular side. The helical transmembrane segment at 227–246 (WVDFGVICALLLLNATVGFV) threads the bilayer. Over 247–377 (QEYQAGSIVD…SQGHFTEVLN (131 aa)) the chain is Cytoplasmic. Residues 378–399 (GIGTILLVLVILTLLCIYTAAF) form a helical membrane-spanning segment. The Extracellular segment spans residues 400–410 (YRSVRLAALLE). A helical membrane pass occupies residues 411 to 433 (YTLAITIIGVPVGLPAVVTTTMA). At 434–805 (VGAAYLAKKK…LIIRNQLLNL (372 aa)) the chain is on the cytoplasmic side. Residue Asp-464 is the 4-aspartylphosphate intermediate of the active site. Residues Asp-720 and Asp-724 each contribute to the Mg(2+) site. Residues 806 to 824 (ELIVFIAIFADVATLAIAY) traverse the membrane as a helical segment. Residues 825-840 (DNAPYAMKPVKWNLPR) lie on the Extracellular side of the membrane. Residues 841 to 860 (LWGLATIVGILLAIGTWIVN) form a helical membrane-spanning segment. Residues 861-912 (TTMIAQGQNRGIVQNFGVQDEVLFLQISLTENWLIFITRCSGPFWSSFPSWQ) lie on the Cytoplasmic side of the membrane. The helical transmembrane segment at 913–933 (LSGAVLVVDILATLFCIFGWF) threads the bilayer. The Extracellular portion of the chain corresponds to 934-946 (KGGHQTSIVAVIR). The chain crosses the membrane as a helical span at residues 947–963 (IWMYSFGIFCLIAGVYY). Residues 964 to 1010 (ILSESSSFDRWMHGKHKERGTTRKLEDFVMQLQRTSTHHEAEGKVTS) lie on the Cytoplasmic side of the membrane.

Belongs to the cation transport ATPase (P-type) (TC 3.A.3) family. Type IIIA subfamily. In terms of processing, in addition to transient phosphorylation of the active site Asp residue, this protein, but not the product of the pma1 locus, is phosphorylated efficiently in isolated plasma membrane.

The protein resides in the cell membrane. The enzyme catalyses ATP + H2O + H(+)(in) = ADP + phosphate + 2 H(+)(out). Its function is as follows. The plasma membrane ATPase of plants and fungi is a hydrogen ion pump. The proton gradient it generates drives the active transport of nutrients by H(+)-symport. The resulting external acidification and/or internal alkinization may mediate growth responses. This chain is Plasma membrane ATPase 2 (pma2), found in Schizosaccharomyces pombe (strain 972 / ATCC 24843) (Fission yeast).